Reading from the N-terminus, the 562-residue chain is Long-chain-fatty-acid--CoA ligase (562 aa).

213–224 is a binding site for ATP; that stretch reads YTGGTTGVAKGA.

The protein belongs to the ATP-dependent AMP-binding enzyme family. It depends on Mg(2+) as a cofactor.

The protein resides in the membrane. It catalyses the reaction a long-chain fatty acid + ATP + CoA = a long-chain fatty acyl-CoA + AMP + diphosphate. It functions in the pathway lipid metabolism; fatty acid beta-oxidation. Its function is as follows. Catalyzes the esterification, concomitant with transport, of exogenous long-chain fatty acids into metabolically active CoA thioesters for subsequent degradation or incorporation into phospholipids. The polypeptide is Long-chain-fatty-acid--CoA ligase (fadD) (Yersinia pestis).